A 107-amino-acid polypeptide reads, in one-letter code: U1-lycotoxin-Ls1e (107 aa).

Positions 1–20 (MMKVLVVVALLVTLISYSSS) are cleaved as a signal peptide. The propeptide occupies 21 to 41 (EGIDDLEADELLSLMANEQTR). Disulfide bonds link cysteine 44–cysteine 59, cysteine 51–cysteine 68, cysteine 58–cysteine 86, and cysteine 70–cysteine 84.

The protein belongs to the neurotoxin 19 (CSTX) family. 04 (U1-Lctx) subfamily. In terms of tissue distribution, expressed by the venom gland.

The protein localises to the secreted. The polypeptide is U1-lycotoxin-Ls1e (Lycosa singoriensis (Wolf spider)).